The following is a 161-amino-acid chain: MTRTRKEELVAEMTAEFKDAGAIIVCDYKGMTVENLETVRNLAKDEDTKVKVVKNRLAMIALQNAGCEAVDFKDTNLVIWGDTQVLPCKIADKAATQFKDHFTIKTGLIQGEVASMETINAMAKLPTRDELIGMLLNVWNAPVQNFTIGLQALADKKESEA.

The protein belongs to the universal ribosomal protein uL10 family. Part of the ribosomal stalk of the 50S ribosomal subunit. The N-terminus interacts with L11 and the large rRNA to form the base of the stalk. The C-terminus forms an elongated spine to which L12 dimers bind in a sequential fashion forming a multimeric L10(L12)X complex.

Forms part of the ribosomal stalk, playing a central role in the interaction of the ribosome with GTP-bound translation factors. The chain is Large ribosomal subunit protein uL10 from Sulfurovum sp. (strain NBC37-1).